A 233-amino-acid polypeptide reads, in one-letter code: Ribonuclease 3 (233 aa).

Positions 9 to 136 constitute an RNase III domain; sequence LQHFWEQFHL…IIGSVYLSGG (128 aa). Position 49 (E49) interacts with Mg(2+). The active site involves D53. Mg(2+)-binding residues include D122 and E125. E125 is a catalytic residue. The DRBM domain occupies 162-231; that stretch reads DSKSALQEFV…ARAALALLKV (70 aa).

It belongs to the ribonuclease III family. As to quaternary structure, homodimer. Mg(2+) serves as cofactor.

The protein localises to the cytoplasm. The enzyme catalyses Endonucleolytic cleavage to 5'-phosphomonoester.. Its function is as follows. Digests double-stranded RNA. Involved in the processing of primary rRNA transcript to yield the immediate precursors to the large and small rRNAs (23S and 16S). Processes some mRNAs, and tRNAs when they are encoded in the rRNA operon. Processes pre-crRNA and tracrRNA of type II CRISPR loci if present in the organism. In Moorella thermoacetica (strain ATCC 39073 / JCM 9320), this protein is Ribonuclease 3.